A 74-amino-acid chain; its full sequence is MDLSKRSAENVAYMIEQLKQKLKVLNLDAIKPSHFSEEWYDELRDIYEMVMKRETFSPSEMQAIVEELGSLRKK.

It belongs to the UPF0435 family.

The chain is UPF0435 protein GK0418 from Geobacillus kaustophilus (strain HTA426).